The primary structure comprises 341 residues: 4-hydroxythreonine-4-phosphate dehydrogenase (341 aa).

T126 contacts substrate. Residues H161, H206, and H272 each contribute to the a divalent metal cation site. K280, N289, and R298 together coordinate substrate.

Belongs to the PdxA family. As to quaternary structure, homodimer. A divalent metal cation is required as a cofactor.

It is found in the cytoplasm. It catalyses the reaction 4-(phosphooxy)-L-threonine + NAD(+) = 3-amino-2-oxopropyl phosphate + CO2 + NADH. It functions in the pathway cofactor biosynthesis; pyridoxine 5'-phosphate biosynthesis; pyridoxine 5'-phosphate from D-erythrose 4-phosphate: step 4/5. In terms of biological role, catalyzes the NAD(P)-dependent oxidation of 4-(phosphooxy)-L-threonine (HTP) into 2-amino-3-oxo-4-(phosphooxy)butyric acid which spontaneously decarboxylates to form 3-amino-2-oxopropyl phosphate (AHAP). The polypeptide is 4-hydroxythreonine-4-phosphate dehydrogenase (Thermosynechococcus vestitus (strain NIES-2133 / IAM M-273 / BP-1)).